Here is a 114-residue protein sequence, read N- to C-terminus: Hydrogenase maturation factor HypA (114 aa).

H2 contributes to the Ni(2+) binding site. Residues C73, C76, C89, and C92 each coordinate Zn(2+).

Belongs to the HypA/HybF family.

Its function is as follows. Involved in the maturation of [NiFe] hydrogenases. Required for nickel insertion into the metal center of the hydrogenase. This chain is Hydrogenase maturation factor HypA, found in Caldanaerobacter subterraneus subsp. tengcongensis (strain DSM 15242 / JCM 11007 / NBRC 100824 / MB4) (Thermoanaerobacter tengcongensis).